The chain runs to 608 residues: UvrABC system protein C (608 aa).

In terms of domain architecture, GIY-YIG spans 15–93 (HQPGVYRMYN…IKQYLPKYNV (79 aa)). Residues 203–238 (RQVIQSLVEQMEGASQALNFEKAATIRDQIQSMRRV) enclose the UVR domain.

This sequence belongs to the UvrC family. In terms of assembly, interacts with UvrB in an incision complex.

It is found in the cytoplasm. Its function is as follows. The UvrABC repair system catalyzes the recognition and processing of DNA lesions. UvrC both incises the 5' and 3' sides of the lesion. The N-terminal half is responsible for the 3' incision and the C-terminal half is responsible for the 5' incision. In Aliivibrio salmonicida (strain LFI1238) (Vibrio salmonicida (strain LFI1238)), this protein is UvrABC system protein C.